A 291-amino-acid chain; its full sequence is 4-hydroxy-tetrahydrodipicolinate synthase (291 aa).

Threonine 44 provides a ligand contact to pyruvate. Tyrosine 132 acts as the Proton donor/acceptor in catalysis. Residue lysine 160 is the Schiff-base intermediate with substrate of the active site. Isoleucine 202 is a pyruvate binding site.

This sequence belongs to the DapA family. Homotetramer; dimer of dimers.

It localises to the cytoplasm. The catalysed reaction is L-aspartate 4-semialdehyde + pyruvate = (2S,4S)-4-hydroxy-2,3,4,5-tetrahydrodipicolinate + H2O + H(+). Its pathway is amino-acid biosynthesis; L-lysine biosynthesis via DAP pathway; (S)-tetrahydrodipicolinate from L-aspartate: step 3/4. Functionally, catalyzes the condensation of (S)-aspartate-beta-semialdehyde [(S)-ASA] and pyruvate to 4-hydroxy-tetrahydrodipicolinate (HTPA). The polypeptide is 4-hydroxy-tetrahydrodipicolinate synthase (Thermodesulfovibrio yellowstonii (strain ATCC 51303 / DSM 11347 / YP87)).